Reading from the N-terminus, the 145-residue chain is Cell division protein SepF (145 aa).

Belongs to the SepF family. Homodimer. Interacts with FtsZ.

Its subcellular location is the cytoplasm. In terms of biological role, cell division protein that is part of the divisome complex and is recruited early to the Z-ring. Probably stimulates Z-ring formation, perhaps through the cross-linking of FtsZ protofilaments. Its function overlaps with FtsA. The polypeptide is Cell division protein SepF (Lactobacillus helveticus (strain DPC 4571)).